The primary structure comprises 806 residues: DNA topoisomerase 1 (806 aa).

Positions 1–15 (MSVVSNHHSNGNGNS) are enriched in low complexity. The disordered stretch occupies residues 1–236 (MSVVSNHHSN…KKEPPKKKVK (236 aa)). Residues 24–34 (DEIKKEVKDEP) are compositionally biased toward basic and acidic residues. Basic residues-rich tracts occupy residues 49–60 (RDKKEKKQKKRK) and 98–108 (EKKKSKKNNKK). The span at 113 to 127 (SSEDDDEESEGDVSE) shows a compositional bias: acidic residues. Residues 128-137 (EDVKPQIHSD) show a composition bias toward basic and acidic residues. Positions 138–153 (DELEEEDEAPTTDDEE) are enriched in acidic residues. Positions 159–176 (EKERRKKEKREKKERKEK) are enriched in basic residues. A compositionally biased stretch (basic and acidic residues) spans 177 to 188 (KRLEKENRKIKE). A compositionally biased stretch (acidic residues) spans 189–199 (EDDEDSDDEDD). Residues 210 to 229 (KGAEKSKPSTSKKDAGGKKE) are compositionally biased toward basic and acidic residues. Interaction with DNA regions lie at residues 467–468 (KY), 530–535 (RAGNEK), and 634–636 (TVK). Positions 474–803 (SSKIKGEKDF…IDMTNSSDEE (330 aa)) constitute a Topo IB-type catalytic domain. Tyr-761 acts as the O-(3'-phospho-DNA)-tyrosine intermediate in catalysis.

Belongs to the type IB topoisomerase family. Expressed in male germ cells and in mature sperm.

The protein localises to the nucleus. It is found in the nucleolus. It localises to the chromosome. The catalysed reaction is ATP-independent breakage of single-stranded DNA, followed by passage and rejoining.. Releases the supercoiling and torsional tension of DNA introduced during the DNA replication and transcription by transiently cleaving and rejoining one strand of the DNA duplex. Introduces a single-strand break via transesterification at a target site in duplex DNA. The scissile phosphodiester is attacked by the catalytic tyrosine of the enzyme, resulting in the formation of a DNA-(3'-phosphotyrosyl)-enzyme intermediate and the expulsion of a 5'-OH DNA strand. The free DNA strand then rotates around the intact phosphodiester bond on the opposing strand, thus removing DNA supercoils. Finally, in the religation step, the DNA 5'-OH attacks the covalent intermediate to expel the active-site tyrosine and restore the DNA phosphodiester backbone. Required for normal spermatogenesis and oogenesis. In Caenorhabditis elegans, this protein is DNA topoisomerase 1 (top-1).